The following is a 570-amino-acid chain: Sulfite reductase [NADPH] hemoprotein beta-component (570 aa).

4 residues coordinate [4Fe-4S] cluster: Cys-434, Cys-440, Cys-479, and Cys-483. Cys-483 serves as a coordination point for siroheme.

The protein belongs to the nitrite and sulfite reductase 4Fe-4S domain family. Alpha(8)-beta(8). The alpha component is a flavoprotein, the beta component is a hemoprotein. Requires siroheme as cofactor. [4Fe-4S] cluster is required as a cofactor.

The enzyme catalyses hydrogen sulfide + 3 NADP(+) + 3 H2O = sulfite + 3 NADPH + 4 H(+). It functions in the pathway sulfur metabolism; hydrogen sulfide biosynthesis; hydrogen sulfide from sulfite (NADPH route): step 1/1. In terms of biological role, component of the sulfite reductase complex that catalyzes the 6-electron reduction of sulfite to sulfide. This is one of several activities required for the biosynthesis of L-cysteine from sulfate. This chain is Sulfite reductase [NADPH] hemoprotein beta-component, found in Shigella flexneri.